A 326-amino-acid chain; its full sequence is Putative UPF0725 protein At1g28500 (326 aa).

Basic and acidic residues predominate over residues 301–320; the sequence is KDTEQRSKTRQSEEKVESSQ. Residues 301–326 are disordered; sequence KDTEQRSKTRQSEEKVESSQKRSRLC.

Belongs to the UPF0725 (EMB2204) family.

In Arabidopsis thaliana (Mouse-ear cress), this protein is Putative UPF0725 protein At1g28500.